Reading from the N-terminus, the 851-residue chain is Phosphatidylinositol 4-kinase pik1 (851 aa).

One can recognise a PIK helical domain in the interval 1–123 (MPSSNSGNEL…KICKRLYNRI (123 aa)). 4 positions are modified to phosphoserine: S202, S219, S222, and S235. Y236 carries the phosphotyrosine modification. The tract at residues 384–404 (LQDSTDNDISESESEGGDLSM) is disordered. Acidic residues predominate over residues 388–399 (TDNDISESESEG). Positions 558 to 836 (YAKKERIRKS…LIQKANCSVW (279 aa)) constitute a PI3K/PI4K catalytic domain. Residues 564–570 (IRKSSPY) form a G-loop region. The segment at 706–714 (QLKDRHNGN) is catalytic loop. Residues 725-749 (HIDFGFLLTNTPGNVGFESAPFKLT) form an activation loop region.

This sequence belongs to the PI3/PI4-kinase family. As to quaternary structure, interacts with cdc4 and cam2.

Its subcellular location is the golgi apparatus. It is found in the nucleus. It carries out the reaction a 1,2-diacyl-sn-glycero-3-phospho-(1D-myo-inositol) + ATP = a 1,2-diacyl-sn-glycero-3-phospho-(1D-myo-inositol 4-phosphate) + ADP + H(+). Acts on phosphatidylinositol (PI) in the first committed step in the production of the second messenger inositol 1,4,5,-trisphosphate. PIK1 is part of a nuclear phosphoinositide cycle and could control cytokinesis through the actin cytoskeleton. The chain is Phosphatidylinositol 4-kinase pik1 (pik1) from Schizosaccharomyces pombe (strain 972 / ATCC 24843) (Fission yeast).